A 160-amino-acid polypeptide reads, in one-letter code: Transcription elongation factor GreA (160 aa).

This sequence belongs to the GreA/GreB family.

Its function is as follows. Necessary for efficient RNA polymerase transcription elongation past template-encoded arresting sites. The arresting sites in DNA have the property of trapping a certain fraction of elongating RNA polymerases that pass through, resulting in locked ternary complexes. Cleavage of the nascent transcript by cleavage factors such as GreA or GreB allows the resumption of elongation from the new 3'terminus. GreA releases sequences of 2 to 3 nucleotides. This Francisella tularensis subsp. tularensis (strain FSC 198) protein is Transcription elongation factor GreA.